The following is a 681-amino-acid chain: Cobalamin-dependent radical SAM methyltransferase TokK (681 aa).

The B12-binding domain occupies 1–144 (MSAELASRGR…ATRLSDHPDY (144 aa)). Residues asparagine 18, serine 72, tyrosine 74, valine 75, histidine 103, glycine 126, and glutamate 127 each contribute to the cob(II)alamin site. Positions 192–417 (RGLRFYALWE…RMYVERPGTP (226 aa)) constitute a Radical SAM core domain. [4Fe-4S] cluster is bound by residues cysteine 206 and cysteine 210. Phenylalanine 212 contacts 5'-deoxyadenosine. Residue cysteine 213 participates in [4Fe-4S] cluster binding. Aspartate 214 and cysteine 249 together coordinate cob(II)alamin. Glutamine 312, glutamate 349, and glycine 384 together coordinate 5'-deoxyadenosine.

The protein belongs to the methyltransferase superfamily. The cofactor is [4Fe-4S] cluster. It depends on cob(II)alamin as a cofactor.

The protein operates within antibiotic biosynthesis. In terms of biological role, methyltransferase involved in the biosynthesis of the beta-lactam carbapenem antibiotic asparenomycin. Catalyzes three consecutive S-adenosyl-L-methionine-dependent methylations to build out the C6-isopropyl side chain in a stereocontrolled manner. The sequence is that of Cobalamin-dependent radical SAM methyltransferase TokK from Streptomyces tokunonensis.